The sequence spans 166 residues: Ribosome maturation factor RimM (166 aa).

A PRC barrel domain is found at Asp91–Leu165.

This sequence belongs to the RimM family. As to quaternary structure, binds ribosomal protein uS19.

Its subcellular location is the cytoplasm. In terms of biological role, an accessory protein needed during the final step in the assembly of 30S ribosomal subunit, possibly for assembly of the head region. Essential for efficient processing of 16S rRNA. May be needed both before and after RbfA during the maturation of 16S rRNA. It has affinity for free ribosomal 30S subunits but not for 70S ribosomes. The sequence is that of Ribosome maturation factor RimM from Dinoroseobacter shibae (strain DSM 16493 / NCIMB 14021 / DFL 12).